The primary structure comprises 143 residues: Transcription antitermination protein NusB (143 aa).

Belongs to the NusB family.

In terms of biological role, involved in transcription antitermination. Required for transcription of ribosomal RNA (rRNA) genes. Binds specifically to the boxA antiterminator sequence of the ribosomal RNA (rrn) operons. The sequence is that of Transcription antitermination protein NusB from Buchnera aphidicola subsp. Acyrthosiphon pisum (strain APS) (Acyrthosiphon pisum symbiotic bacterium).